A 328-amino-acid polypeptide reads, in one-letter code: Flagellar motor switch protein FliM (328 aa).

Residues 1 to 45 form an interaction with unphosphorylated CheY region; that stretch reads MSDVLSQEEINQLIEALMKGELKEEDLLKEEEEKKVKPYDFKRPS.

It belongs to the FliM family. Interacts (via N-terminus) with unphosphorylated CheY. Interacts (via central domain) with FliG (via central domain or via central domain and C-terminus).

It is found in the cell inner membrane. The protein resides in the bacterial flagellum basal body. In terms of biological role, fliM is one of three proteins (FliG, FliN, FliM) that forms the rotor-mounted switch complex (C ring), located at the base of the basal body. This complex interacts with the CheY and CheX chemotaxis proteins, in addition to contacting components of the motor that determine the direction of flagellar rotation. This Thermotoga maritima (strain ATCC 43589 / DSM 3109 / JCM 10099 / NBRC 100826 / MSB8) protein is Flagellar motor switch protein FliM.